Here is a 290-residue protein sequence, read N- to C-terminus: Arylamine N-acetyltransferase 1 (290 aa).

M1 is modified (N-acetylmethionine). Catalysis depends on C68, which acts as the Acyl-thioester intermediate. 2 residues coordinate CoA: T103 and G104. Residue 106 to 107 (IH) coordinates substrate. Catalysis depends on residues H107 and D122. Positions 208 and 214 each coordinate CoA.

Belongs to the arylamine N-acetyltransferase family.

Its subcellular location is the cytoplasm. It carries out the reaction an arylamine + acetyl-CoA = an N-acetylarylamine + CoA. In Oryctolagus cuniculus (Rabbit), this protein is Arylamine N-acetyltransferase 1 (NAT1).